The chain runs to 358 residues: Ethanol acetyltransferase 1 (358 aa).

An AB hydrolase-1 domain is found at 59 to 166 (PIVFIHGLFG…NAPINQPHIS (108 aa)). Active-site charge relay system residues include Ser-132, Asp-156, and His-305.

The protein belongs to the AB hydrolase superfamily.

It is found in the mitochondrion. It catalyses the reaction ethanol + acetyl-CoA = ethyl acetate + CoA. The catalysed reaction is acetyl-CoA + H2O = acetate + CoA + H(+). The enzyme catalyses ethyl acetate + H2O = ethanol + acetate + H(+). Functionally, alcohol acetyltransferase that catalyzes the synthesis of ethyl acetate from ethanol and acetyl-CoA. Can also function as a thioesterase by hydrolyzing acetyl-CoA in the absence of ethanol, as well as esterase hydrolyzing ethyl acetate. This chain is Ethanol acetyltransferase 1 (EAT1), found in Eremothecium cymbalariae (strain CBS 270.75 / DBVPG 7215 / KCTC 17166 / NRRL Y-17582) (Yeast).